The following is a 341-amino-acid chain: Putative methyltransferase YGR283C (341 aa).

The protein belongs to the class IV-like SAM-binding methyltransferase superfamily.

It localises to the nucleus. It is found in the nucleolus. The polypeptide is Putative methyltransferase YGR283C (Saccharomyces cerevisiae (strain ATCC 204508 / S288c) (Baker's yeast)).